Consider the following 373-residue polypeptide: Alanine dehydrogenase (373 aa).

Positions 15 and 75 each coordinate substrate. Catalysis depends on H96, which acts as the Proton donor/acceptor. Residues S134, 178 to 179, D198, S220, 239 to 240, 267 to 270, R280, and 299 to 302 each bind NAD(+); these read IV, VL, VAID, and VANI. Catalysis depends on D270, which acts as the Proton donor/acceptor.

It belongs to the AlaDH/PNT family. Homohexamer. Trimer of dimer.

The protein resides in the cytoplasm. It carries out the reaction L-alanine + NAD(+) + H2O = pyruvate + NH4(+) + NADH + H(+). It functions in the pathway amino-acid degradation; L-alanine degradation via dehydrogenase pathway; NH(3) and pyruvate from L-alanine: step 1/1. In terms of biological role, catalyzes the reversible reductive amination of pyruvate to L-alanine. This enzyme is a key factor in the assimilation of L-alanine as an energy source through the tricarboxylic acid cycle. The sequence is that of Alanine dehydrogenase from Methanococcus maripaludis (strain DSM 14266 / JCM 13030 / NBRC 101832 / S2 / LL).